Consider the following 324-residue polypeptide: Probable UDP-sugar transporter protein SLC35A4 (324 aa).

At 1–18 (MSVEDGGMPGLSRPRQAR) the chain is on the cytoplasmic side. The chain crosses the membrane as a helical span at residues 19–39 (WTLMLLLSTAMYGAHAPLLAL). Residues 40 to 52 (CHVDGRVPFRPSS) are Lumenal-facing. The helical transmembrane segment at 53–73 (AVLLTELTKLLLCAFSLLVGW) threads the bilayer. Residues 74–85 (QAWPQGAPPWRQ) lie on the Cytoplasmic side of the membrane. A helical transmembrane segment spans residues 86–106 (AAPFALSALLYGANNNLVIYL). Residues 107 to 142 (QRYMDPSTYQVLSNLKIGSTAVLYCLCLRHRLSVRQ) lie on the Lumenal side of the membrane. Residues 143-163 (GLALLLLMAAGACYAAGGLQV) form a helical membrane-spanning segment. Residues 164–180 (PGNTLPRPPPAAAASPM) are Cytoplasmic-facing. The chain crosses the membrane as a helical span at residues 181–201 (PLHITPLGLLLLILYCLISGL). At 202 to 214 (SSVYTELLMKRQQ) the chain is on the lumenal side. The helical transmembrane segment at 215 to 235 (LPLALQNLFLYTFGVLLNLGL) threads the bilayer. Residues 236 to 250 (HAGGGPGPGLLEGFS) lie on the Cytoplasmic side of the membrane. Residues 251 to 271 (GWAALVVLSQALNGLLMSVVM) traverse the membrane as a helical segment. Residues 272-275 (KHGS) lie on the Lumenal side of the membrane. Residues 276-298 (SITRLFVVSCSLVVNAVLSAVLL) traverse the membrane as a helical segment. Topologically, residues 299-324 (RLQLTAAFFLATLLIGLAMRLYYGSR) are cytoplasmic.

It belongs to the nucleotide-sugar transporter family. SLC35A subfamily. As to quaternary structure, found in a complex with SLC35A2 and SLC35A3.

The protein localises to the golgi apparatus membrane. The enzyme catalyses CDP-L-ribitol(in) + CDP(out) = CDP-L-ribitol(out) + CDP(in). Its function is as follows. Mediates the transport of CDP-ribitol. Does not exhibit CMP-sialic acid, UDP-galactose and UDP-N-acetylglucosamine transport activity. This Pongo abelii (Sumatran orangutan) protein is Probable UDP-sugar transporter protein SLC35A4.